The chain runs to 435 residues: Enolase (435 aa).

A (2R)-2-phosphoglycerate-binding site is contributed by glutamine 163. The active-site Proton donor is glutamate 205. Mg(2+)-binding residues include aspartate 243, glutamate 292, and aspartate 319. Positions 344, 373, 374, and 395 each coordinate (2R)-2-phosphoglycerate. The Proton acceptor role is filled by lysine 344.

This sequence belongs to the enolase family. It depends on Mg(2+) as a cofactor.

The protein localises to the cytoplasm. It is found in the secreted. Its subcellular location is the cell surface. The enzyme catalyses (2R)-2-phosphoglycerate = phosphoenolpyruvate + H2O. It functions in the pathway carbohydrate degradation; glycolysis; pyruvate from D-glyceraldehyde 3-phosphate: step 4/5. In terms of biological role, catalyzes the reversible conversion of 2-phosphoglycerate (2-PG) into phosphoenolpyruvate (PEP). It is essential for the degradation of carbohydrates via glycolysis. This is Enolase from Streptococcus equi subsp. zooepidemicus (strain MGCS10565).